We begin with the raw amino-acid sequence, 468 residues long: Arginine biosynthesis bifunctional protein ArgJ, mitochondrial (468 aa).

Residues 1–23 (MVGFSRCALSQLRQPKAQLVRSF) constitute a mitochondrion transit peptide. T198, K227, T238, E324, N463, and T468 together coordinate substrate. The active-site Nucleophile is T238.

The protein belongs to the ArgJ family. In terms of assembly, heterodimer of an alpha and a beta chain. In terms of processing, the alpha and beta chains are autoproteolytically processed from a single precursor protein within the mitochondrion.

The protein localises to the mitochondrion matrix. The catalysed reaction is N(2)-acetyl-L-ornithine + L-glutamate = N-acetyl-L-glutamate + L-ornithine. It catalyses the reaction L-glutamate + acetyl-CoA = N-acetyl-L-glutamate + CoA + H(+). The protein operates within amino-acid biosynthesis; L-arginine biosynthesis; L-ornithine and N-acetyl-L-glutamate from L-glutamate and N(2)-acetyl-L-ornithine (cyclic): step 1/1. It functions in the pathway amino-acid biosynthesis; L-arginine biosynthesis; N(2)-acetyl-L-ornithine from L-glutamate: step 1/4. Functionally, catalyzes two activities which are involved in the cyclic version of arginine biosynthesis: the synthesis of acetylglutamate from glutamate and acetyl-CoA, and of ornithine by transacetylation between acetylornithine and glutamate. The polypeptide is Arginine biosynthesis bifunctional protein ArgJ, mitochondrial (Podospora anserina (strain S / ATCC MYA-4624 / DSM 980 / FGSC 10383) (Pleurage anserina)).